Here is a 131-residue protein sequence, read N- to C-terminus: Inactive protein FON2 SPARE1 (131 aa).

The tract at residues 67-131 (SPSSLTTTDR…VPTGPNPLHH (65 aa)) is disordered. A compositionally biased stretch (basic residues) spans 76–97 (RHHHHHRHHGHHHHRGHDRWNR).

This sequence belongs to the CLV3/ESR signal peptide family. Expressed in all aerial apical meristems, including the floral and inflorescence meristems in the reproductive phase and the shoot apical meristem in the vegetative phase. Also detected in the primordia of lateral organs such as the leaf and the floral organs.

Non functional suppressor of the fon2 mutation. In Oryza sativa subsp. japonica, the protein has a single amino acid substitution at the putative processing site of the signal peptide while in all the other varieties/species of domesticated and wild rice tested the protein is functional. This Oryza sativa subsp. japonica (Rice) protein is Inactive protein FON2 SPARE1 (FOS1).